A 104-amino-acid chain; its full sequence is L-rhamnose mutarotase (104 aa).

Residue Tyr18 participates in substrate binding. The active-site Proton donor is the His22. Substrate-binding positions include Tyr41 and 76 to 77; that span reads WW.

It belongs to the rhamnose mutarotase family. In terms of assembly, homodimer.

The protein resides in the cytoplasm. It catalyses the reaction alpha-L-rhamnose = beta-L-rhamnose. It functions in the pathway carbohydrate metabolism; L-rhamnose metabolism. Involved in the anomeric conversion of L-rhamnose. In Lachnoclostridium phytofermentans (strain ATCC 700394 / DSM 18823 / ISDg) (Clostridium phytofermentans), this protein is L-rhamnose mutarotase.